Here is a 474-residue protein sequence, read N- to C-terminus: Fumarate hydratase class II (474 aa).

Residues 104–106 (SGT), 128–131 (HPND), 138–140 (SSN), and T186 each bind substrate. H187 (proton donor/acceptor) is an active-site residue. The active site involves S318. Substrate is bound by residues S319 and 324–326 (KVN).

This sequence belongs to the class-II fumarase/aspartase family. Fumarase subfamily. In terms of assembly, homotetramer.

Its subcellular location is the cytoplasm. The catalysed reaction is (S)-malate = fumarate + H2O. The protein operates within carbohydrate metabolism; tricarboxylic acid cycle; (S)-malate from fumarate: step 1/1. Involved in the TCA cycle. Catalyzes the stereospecific interconversion of fumarate to L-malate. The chain is Fumarate hydratase class II from Mycobacterium bovis (strain ATCC BAA-935 / AF2122/97).